We begin with the raw amino-acid sequence, 219 residues long: uncharacterized protein (219 aa).

This is an uncharacterized protein from Mycoplasma genitalium (strain ATCC 33530 / DSM 19775 / NCTC 10195 / G37) (Mycoplasmoides genitalium).